Consider the following 361-residue polypeptide: tRNA-specific 2-thiouridylase MnmA (361 aa).

Residues 8-15 and M34 contribute to the ATP site; that span reads AMSGGVDS. The active-site Nucleophile is the C104. A disulfide bridge connects residues C104 and C202. Residue G128 participates in ATP binding. The segment at 152–154 is interaction with tRNA; sequence KDQ. C202 functions as the Cysteine persulfide intermediate in the catalytic mechanism. Residues 307-308 are interaction with tRNA; that stretch reads RY.

The protein belongs to the MnmA/TRMU family.

The protein resides in the cytoplasm. The enzyme catalyses S-sulfanyl-L-cysteinyl-[protein] + uridine(34) in tRNA + AH2 + ATP = 2-thiouridine(34) in tRNA + L-cysteinyl-[protein] + A + AMP + diphosphate + H(+). Functionally, catalyzes the 2-thiolation of uridine at the wobble position (U34) of tRNA, leading to the formation of s(2)U34. The chain is tRNA-specific 2-thiouridylase MnmA from Caldicellulosiruptor saccharolyticus (strain ATCC 43494 / DSM 8903 / Tp8T 6331).